A 201-amino-acid polypeptide reads, in one-letter code: MSFAEKITGLLARPNQQQDPAGGPEAPWYLKYGSRLLGIVGAFFAILFGLWNVLSIITLSVSCLVAGIIQMIAGFVVMALEAPCCFVCIDQVNVMADKLDAKPMYFRAGLYCALAVPPIFMCFGLASLFGSGLIFATGVVYGMMALGKKASAADMRAAAQQTDYGGNAATSQAATTSDRAGIVNNAQPFSFTGAVGTDSNV.

Transmembrane regions (helical) follow at residues 37-57, 59-79, and 103-120; these read LGIV…LSII, LSVS…VVMA, and PMYF…PPIF.

This sequence belongs to the calcium channel flower family. In terms of assembly, homomultimer. Associates with the dally/ magu complex.

The protein resides in the cell membrane. It is found in the cytoplasmic vesicle. The protein localises to the secretory vesicle. It localises to the synaptic vesicle membrane. Its subcellular location is the presynaptic cell membrane. The protein resides in the endosome. With respect to regulation, channel activity is inhibited by La(3+), which reduces Ca(2+) influx and thus inhibits it's function in promoting activity-dependent bulk endocytosis (ADBE) in response to high stimuli. In terms of biological role, transmembrane protein which mediates synaptic endocytosis, fitness-based cell culling, neuronal culling, morphogen gradient scaling, and calcium transport. Regulates synaptic endocytosis and hence couples exo- with endocytosis. Controls two major modes of synaptic vesicle (SV) endocytosis in the synaptic boutons of neuromuscular junctions (NMJs); Ca(2+) channel-independent Clathrin-mediated endocytosis (CME) in response to mild stimulation, and Ca(2+) channel-dependent activity-dependent bulk endocytosis (ADBE) in response to strong stimulation. Functions in ADBE and subsequent SV reformation from bulk endosomes by initiating Ca(2+) channel-dependent phosphatidylinositol 4,5-bisphosphate (PtdIns(4,5)P2) compartmentalization in synaptic boutons. There it acts at the periactive zone to provide the low Ca(2+) levels required to initiate Calcineurin activation and upregulate PtdIns(4,5)P2. Conversely PtdIns(4,5)P2 enhances fwe Ca(2+) channel-activity, establishing a positive feedback loop that induces PtdIns(4,5)P2 microdomain at the periactive zone. These microdomains trigger bulk membrane invagination (i.e. ADBE) by triggering actin polymerization while also promoting localization of fwe to bulk endosomes, thereby removing the ADBE trigger to reduce endocytosis and prevent excess membrane uptake. PtdIns(4,5)P2 then promotes SV reformation from the bulk endosomes, to coordinate ADBE and subsequent SV reformation. Different combinations of the flower isoforms at the cell membrane are also required for the identification and elimination of suboptimal or supernumerary cells during development, regeneration, and adulthood. Required for the recognition and elimination of unfit cells in the developing wing during cell competition. In the developing pupal retina, mediates the elimination of unwanted postmitotic neurons, including supernumerary photoreceptor neurons that form at the periphery of the retina and are contained within incomplete ommatidia units. Also required for efficient elimination and replacement of old neurons by newly generated neurons during regeneration in the adult brain following mechanical injury. Downstream of the flower fitness fingerprints, cells identified as unwanted or unfit are eliminated via apoptosis through the expression of ahuizotl (azot). However, the cells marked for elimination by the flower isoforms only undergo apoptosis if additional thresholds are met; (1) their neighboring fit/healthy cells express different levels of the fwe isoforms, and (2) the levels of the protective signal SPARC expressed by the loser or unwanted cells are unable to inhibit caspase activation. These additional thresholds for flower-mediated apoptosis, allows useful cells to recover from transient and limited stress before they are unnecessarily eliminated. Functions with dally and magu in a mechanism of scaling, which utilises apoptosis to ensure that the dpp morphogen gradient, which mediates organ growth, remains proportional to the size of the growing wing. In this mechanism, fwe represses dally- and Magu-dependent activity in expanding the gradient, and dally/Magu inhibits fwe-dependent apoptosis to keep cell death rate low. When the levels of these different proteins are optimally regulated the gradient correctly scales with organ growth but when this fails, fwe-mediated apoptosis is activated to trim the developing tissue to match the correct size of the gradient. This Drosophila willistoni (Fruit fly) protein is Calcium channel flower.